The chain runs to 115 residues: Large ribosomal subunit protein uL22 (115 aa).

It belongs to the universal ribosomal protein uL22 family. In terms of assembly, part of the 50S ribosomal subunit.

Its function is as follows. This protein binds specifically to 23S rRNA; its binding is stimulated by other ribosomal proteins, e.g. L4, L17, and L20. It is important during the early stages of 50S assembly. It makes multiple contacts with different domains of the 23S rRNA in the assembled 50S subunit and ribosome. The globular domain of the protein is located near the polypeptide exit tunnel on the outside of the subunit, while an extended beta-hairpin is found that lines the wall of the exit tunnel in the center of the 70S ribosome. The sequence is that of Large ribosomal subunit protein uL22 from Coxiella burnetii (strain CbuG_Q212) (Coxiella burnetii (strain Q212)).